We begin with the raw amino-acid sequence, 475 residues long: MAGRPHPYDGNSSDPENWDRKLHSRPRKLYKHSSTSSRIAKGGVDHTKMSLHGASGGHERSRDRRRSSDRSRDSSHERTESQLTPCIRNVTSPTRQHHVEREKDHSSSRPSSPRPQKASPNGSISSAGNSSRNSSQSSSDGSCKTAGEMVFVYENAKEGARNIRTSERVTLIVDNTRFVVDPSIFTAQPNTMLGRMFGSGREHNFTRPNEKGEYEVAEGIGSTVFRAILDYYKTGIIRCPDGISIPELREACDYLCISFEYSTIKCRDLSALMHELSNDGARRQFEFYLEEMILPLMVASAQSGERECHIVVLTDDDVVDWDEEYPPQMGEEYSQIIYSTKLYRFFKYIENRDVAKSVLKERGLKKIRLGIEGYPTYKEKVKKRPGGRPEVIYNYVQRPFIRMSWEKEEGKSRHVDFQCVKSKSITNLAAAAADIPQDQLVVMHPTPQVDELDILPIHPPSGNSDLDPDAQNPML.

Residues 1-143 (MAGRPHPYDG…SSQSSSDGSC (143 aa)) form a disordered region. The span at 22 to 31 (LHSRPRKLYK) shows a compositional bias: basic residues. Over residues 57–80 (GHERSRDRRRSSDRSRDSSHERTE) the composition is skewed to basic and acidic residues. Positions 81-94 (SQLTPCIRNVTSPT) are enriched in polar residues. The segment covering 97-107 (HHVEREKDHSS) has biased composition (basic and acidic residues). The segment covering 108–142 (SRPSSPRPQKASPNGSISSAGNSSRNSSQSSSDGS) has biased composition (low complexity). Residues 146–475 (AGEMVFVYEN…LDPDAQNPML (330 aa)) are interaction with AKT family members. One can recognise a BTB domain in the interval 167 to 241 (ERVTLIVDNT…YKTGIIRCPD (75 aa)). Residues 455 to 475 (LPIHPPSGNSDLDPDAQNPML) are disordered.

Interacts (via C-terminal 330-amino-acid region) with AKT1; AKT2 and AKT3. Interacts with PPP2CA and PPP1CA. In terms of tissue distribution, ubiquitously expressed. Highly expressed in adult brain, testis, aorta and small intestine and weakly expressed in the heart, lung, liver, kidney, pancreas, spleen, thymus, prostate, ovary and colon. Down-regulated in glioma.

The protein localises to the nucleus. Its subcellular location is the cytoplasm. Plays a major role as an activator of AKT family members by inhibiting PPP2CA-mediated dephosphorylation, thereby keeping AKTs activated. Plays a role in preventing motor neuronal death and accelerating the growth of pancreatic beta cells. The sequence is that of BTB/POZ domain-containing protein 10 (BTBD10) from Homo sapiens (Human).